Reading from the N-terminus, the 1196-residue chain is DNA polymerase beta (1196 aa).

The protein belongs to the DNA polymerase type-B family.

It catalyses the reaction DNA(n) + a 2'-deoxyribonucleoside 5'-triphosphate = DNA(n+1) + diphosphate. Functionally, DNA-directed DNA polymerase involved in viral DNA replication. This chain is DNA polymerase beta, found in African swine fever virus (isolate Pig/Kenya/KEN-50/1950) (ASFV).